Here is a 363-residue protein sequence, read N- to C-terminus: Protein RecA (363 aa).

79-86 (GPESSGKT) contributes to the ATP binding site.

This sequence belongs to the RecA family.

The protein localises to the cytoplasm. Can catalyze the hydrolysis of ATP in the presence of single-stranded DNA, the ATP-dependent uptake of single-stranded DNA by duplex DNA, and the ATP-dependent hybridization of homologous single-stranded DNAs. It interacts with LexA causing its activation and leading to its autocatalytic cleavage. The protein is Protein RecA of Methylobacterium sp. (strain 4-46).